A 484-amino-acid chain; its full sequence is Suppressor of fused homolog (484 aa).

The interval 1–24 (MAELRPSGAPGPTAPPAPGPTAPP) is disordered. A compositionally biased stretch (pro residues) spans 12–23 (PTAPPAPGPTAP). Lys-257 is covalently cross-linked (Glycyl lysine isopeptide (Lys-Gly) (interchain with G-Cter in ubiquitin)). Positions 279–360 (SRPPEDDEDS…SSTAIIPHEL (82 aa)) are disordered. The residue at position 301 (Ser-301) is a Phosphoserine. Lys-303 bears the N6-acetyllysine mark. Lys-321 participates in a covalent cross-link: Glycyl lysine isopeptide (Lys-Gly) (interchain with G-Cter in SUMO2). A compositionally biased stretch (basic and acidic residues) spans 336-347 (AHDRAPSRKDSL). A phosphoserine mark is found at Ser-342, Ser-346, and Ser-352. Thr-353 carries the post-translational modification Phosphothreonine. Ser-481 carries the post-translational modification Phosphoserine.

Belongs to the SUFU family. May form homodimers. Part of a DNA-bound corepressor complex containing SAP18, GLI1 and SIN3. Part of a complex containing CTNNB1. Binds BTRC, GLI2, GLI3, SAP18 and STK36. Binds both free and DNA-bound GLI1. Interacts with KIF7. Interacts with GLI3FL and this interaction regulates the formation of either repressor or activator forms of GLI3. Its association with GLI3FL is regulated by Hh signaling and dissociation of the SUFU-GLI3 interaction requires the presence of the ciliary motor KIF3A. Interacts with ULK3; inactivating the protein kinase activity of ULK3. Interacts with RAB23. Post-translationally, polyubiquitinated at Lys-257 by the SCF(FBXL17) complex, leading to its subsequent degradation and allowing the release of GLI1 for proper hedgehog/smoothened signal transduction. Ubiquitination is impaired by phosphorylation at Ser-342, Ser-346, Ser-352 and Thr-353. Phosphorylation at Ser-342, Ser-346, Ser-352 and Thr-353 prevents ubiquitination by the SCF(FBXL17) complex. Ubiquitous in adult tissues. Detected in osteoblasts of the perichondrium in the developing limb of 12-week old embryos. Isoform 1 is detected in fetal brain, lung, kidney and testis. Isoform 2 is detected in fetal testis, and at much lower levels in fetal brain, lung and kidney.

The protein localises to the cytoplasm. Its subcellular location is the nucleus. In terms of biological role, negative regulator in the hedgehog/smoothened signaling pathway. Down-regulates GLI1-mediated transactivation of target genes. Down-regulates GLI2-mediated transactivation of target genes. Part of a corepressor complex that acts on DNA-bound GLI1. May also act by linking GLI1 to BTRC and thereby targeting GLI1 to degradation by the proteasome. Sequesters GLI1, GLI2 and GLI3 in the cytoplasm, this effect is overcome by binding of STK36 to both SUFU and a GLI protein. Negative regulator of beta-catenin signaling. Regulates the formation of either the repressor form (GLI3R) or the activator form (GLI3A) of the full-length form of GLI3 (GLI3FL). GLI3FL is complexed with SUFU in the cytoplasm and is maintained in a neutral state. Without the Hh signal, the SUFU-GLI3 complex is recruited to cilia, leading to the efficient processing of GLI3FL into GLI3R. When Hh signaling is initiated, SUFU dissociates from GLI3FL and the latter translocates to the nucleus, where it is phosphorylated, destabilized, and converted to a transcriptional activator (GLI3A). Required for normal embryonic development. Required for the proper formation of hair follicles and the control of epidermal differentiation. This is Suppressor of fused homolog from Homo sapiens (Human).